The following is a 166-amino-acid chain: MSDQERETEEDEGGDPSDTAPMLPQRLPDHQASDLMSPGWASLAARGLGTLLFQGWALARLLLHLLLPAAVFLLVLLPAAAVVYLGFLCHSRVHPAPRPACRALLSDRGSAAVIVLGFLSLPPLLVLASAARARLARRLHSLLPPPTWSPGPHRQSDGEKQLCAWV.

The span at 1–15 (MSDQERETEEDEGGD) shows a compositional bias: acidic residues. Positions 1–28 (MSDQERETEEDEGGDPSDTAPMLPQRLP) are disordered. The next 3 helical transmembrane spans lie at 39–59 (GWAS…WALA), 65–85 (LLLP…VVYL), and 111–131 (AAVI…ASAA).

This sequence belongs to the TMEM88 family.

It is found in the membrane. In Bos taurus (Bovine), this protein is Transmembrane protein 278 (TMEM278).